Reading from the N-terminus, the 90-residue chain is Caspase recruitment domain-containing protein 18 (90 aa).

Positions 1 to 90 constitute a CARD domain; that stretch reads MADQLLRKKR…PQLASKMGLH (90 aa).

As to quaternary structure, interacts with pro-CASP1. Interacts with CARD8. In terms of tissue distribution, primarily expressed in the heart and placenta.

Its function is as follows. Inhibits generation of IL-1-beta by interacting with caspase-1 and preventing its association with RIP2. Down-regulates the release of IL1B. This Homo sapiens (Human) protein is Caspase recruitment domain-containing protein 18 (CARD18).